Here is a 1475-residue protein sequence, read N- to C-terminus: Amylopullulanase (1475 aa).

The N-terminal stretch at 1-31 is a signal peptide; sequence MFKRRALGFLLAFLLVFTAVFGSMPMEFAKA. Asp245, Asn247, Asp285, Asp340, Asn398, Asp400, Asn403, Asp404, Gly449, and Asp451 together coordinate Ca(2+). Substrate-binding residues include His524 and Arg627. The active-site Nucleophile is the Asp629. Residue Glu658 is the Proton donor of the active site. Substrate is bound by residues 734–735, Asp794, and Arg798; that span reads HD. Fibronectin type-III domains are found at residues 928-1019 and 1164-1257; these read APQP…PAFP and TPTA…TPDI. Residues 1255-1362 enclose the CBM20 domain; that stretch reads PDIIPIKVTF…VNDTVQRWRD (108 aa).

It belongs to the glycosyl hydrolase 13 family. Requires Ca(2+) as cofactor.

It catalyses the reaction Endohydrolysis of (1-&gt;4)-alpha-D-glucosidic linkages in polysaccharides containing three or more (1-&gt;4)-alpha-linked D-glucose units.. It carries out the reaction Hydrolysis of (1-&gt;6)-alpha-D-glucosidic linkages in pullulan, amylopectin and glycogen, and in the alpha- and beta-limit dextrins of amylopectin and glycogen.. This Thermoanaerobacter thermohydrosulfuricus (Clostridium thermohydrosulfuricum) protein is Amylopullulanase (apu).